The following is a 315-amino-acid chain: FAD-linked oxidoreductase sthB (315 aa).

Positions 19–201 constitute an FAD-binding PCMH-type domain; sequence QPCSLGNYVS…LSMTSRVHAD (183 aa).

It belongs to the oxygen-dependent FAD-linked oxidoreductase family.

The catalysed reaction is betaenone C = betaenone A. It catalyses the reaction stemphyloxin I = stemphyloxin II. It functions in the pathway mycotoxin biosynthesis. Functionally, FAD-linked oxidoreductase; part of the gene cluster that mediates the biosynthesis of the phytotoxin stemphyloxin II. The first step of the pathway is the synthesis of dehydroprobetaenone I by the polyketide synthase sthA and the enoyl reductase sthE via condensation of one acetyl-CoA starter unit with 7 malonyl-CoA units and 5 methylations. The C-terminal reductase (R) domain of sthA catalyzes the reductive release of the polyketide chain. Because sthA lacks a designated enoylreductase (ER) domain, the required activity is provided the enoyl reductase sthE. The short-chain dehydrogenase/reductase sthC then catalyzes reduction of dehydroprobetaenone I to probetaenone I. The cytochrome P450 monooxygenase sthF catalyzes successive epoxidation, oxidation (resulting from epoxide opening) and hydroxylation to install a tertiary alcohol in the decaline ring to yield betaenone C from dehydroprobetaenone I and betaenone B from probetaenone I. The FAD-linked oxidoreductase sthB is responsible for the conversion of betaenone C to betaenone A via an intramolecular aldol reaction between C-1 and C-17 to form the bridged tricyclic system in betaenone A. Finally, the cytochrome P450 monooxygenase sthD catalyzes the hydroxylation of C-15 to afford the final metabolite stemphyloxin II. The chain is FAD-linked oxidoreductase sthB from Phaeosphaeria nodorum (strain SN15 / ATCC MYA-4574 / FGSC 10173) (Glume blotch fungus).